Consider the following 222-residue polypeptide: Large ribosomal subunit protein uL1 (222 aa).

It belongs to the universal ribosomal protein uL1 family. Part of the 50S ribosomal subunit.

In terms of biological role, binds directly to 23S rRNA. Probably involved in E site tRNA release. Functionally, protein L1 is also a translational repressor protein, it controls the translation of its operon by binding to its mRNA. In Pyrobaculum calidifontis (strain DSM 21063 / JCM 11548 / VA1), this protein is Large ribosomal subunit protein uL1.